A 418-amino-acid chain; its full sequence is GTPase Obg (418 aa).

One can recognise an Obg domain in the interval 1–156 (MKFIDEITLN…KKLTLVLKVL (156 aa)). Residues 157-324 (ADVGFVGKPS…LKEALWQSVK (168 aa)) enclose the OBG-type G domain. Residues 163 to 170 (GKPSAGKS), 188 to 192 (FTTLV), 209 to 212 (DLPG), 278 to 281 (NKKD), and 305 to 307 (SAL) each bind GTP. Positions 170 and 190 each coordinate Mg(2+). Residues 339–417 (VFINFEADFN…IYDYEFVWGN (79 aa)) enclose the OCT domain.

The protein belongs to the TRAFAC class OBG-HflX-like GTPase superfamily. OBG GTPase family. Monomer. Mg(2+) is required as a cofactor.

Its subcellular location is the cytoplasm. In terms of biological role, an essential GTPase which binds GTP, GDP and possibly (p)ppGpp with moderate affinity, with high nucleotide exchange rates and a fairly low GTP hydrolysis rate. Plays a role in control of the cell cycle, stress response, ribosome biogenesis and in those bacteria that undergo differentiation, in morphogenesis control. This chain is GTPase Obg, found in Mycoplasmopsis pulmonis (strain UAB CTIP) (Mycoplasma pulmonis).